The following is a 276-amino-acid chain: Undecaprenyl-diphosphatase (276 aa).

Transmembrane regions (helical) follow at residues 40–60 (GLAF…TFFW), 98–118 (WLII…KDAI), 121–141 (IFRG…VLYY), 155–175 (MSFK…FPGI), 200–220 (FLLS…DIAT), 227–247 (VLLA…KLLM), and 255–275 (LDIF…LSVV).

The protein belongs to the UppP family.

It is found in the cell membrane. It carries out the reaction di-trans,octa-cis-undecaprenyl diphosphate + H2O = di-trans,octa-cis-undecaprenyl phosphate + phosphate + H(+). Catalyzes the dephosphorylation of undecaprenyl diphosphate (UPP). The chain is Undecaprenyl-diphosphatase from Methanosphaera stadtmanae (strain ATCC 43021 / DSM 3091 / JCM 11832 / MCB-3).